Here is a 297-residue protein sequence, read N- to C-terminus: SWIRM domain-containing protein laf1 (297 aa).

Disordered regions lie at residues 50 to 70 and 109 to 173; these read PKCSTIPESPKDSIVEPKPTA and STPA…EFSS. Residues 159–173 are compositionally biased toward polar residues; the sequence is QHNTRFKQSSREFSS. One can recognise an SWIRM domain in the interval 207–297; it reads LRSEWKGPPL…AFHDEGFFDD (91 aa).

As to quaternary structure, component of the RPD3C(L) complex.

The protein resides in the nucleus. In terms of biological role, component of the RPD3C(L) histone deacetylase complex (HDAC) responsible for the deacetylation of lysine residues on the N-terminal part of the core histones (H2A, H2B, H3 and H4). Histone deacetylation gives a tag for epigenetic repression and plays an important role in transcriptional regulation, cell cycle progression and developmental events. In Schizosaccharomyces pombe (strain 972 / ATCC 24843) (Fission yeast), this protein is SWIRM domain-containing protein laf1 (laf1).